A 1390-amino-acid chain; its full sequence is DNA-directed RNA polymerase III subunit RPC1 (1390 aa).

Zn(2+)-binding residues include cysteine 69, cysteine 72, cysteine 79, histidine 82, cysteine 109, and cysteine 112. Lysine 144 is a binding site for DNA. Residues cysteine 156 and cysteine 159 each contribute to the Zn(2+) site. Positions 167, 326, 348, 353, 360, and 366 each coordinate DNA. Lysine 445 is modified (N6-acetyllysine). Arginine 464 serves as a coordination point for RNA. Residues aspartate 499, aspartate 501, and aspartate 503 each contribute to the Mg(2+) site. Aspartate 503 is a binding site for RNA. The segment at 843–884 is bridging helix; sequence TPTEFFFHTMAGREGLVDTAVKTAETGYMQRRLVKSLEDLCS. Positions 1029-1070 are trigger loop; sequence PGSAVGALCAQSIGEPGTQMTLKTFHFAGVASMNITLGVPRI. DNA-binding residues include arginine 1159, arginine 1305, and lysine 1323.

It belongs to the RNA polymerase beta' chain family. In terms of assembly, component of the RNA polymerase III (Pol III) (Pol III) complex consisting of 17 subunits: a ten-subunit catalytic core composed of POLR3A/RPC1, POLR3B/RPC2, POLR1C/RPAC1, POLR1D/RPAC2, POLR3K/RPC10, POLR2E/RPABC1, POLR2F/RPABC2, POLR2H/RPABC3, POLR2K/RPABC4 and POLR2L/RPABC5; a mobile stalk composed of two subunits POLR3H/RPC8 and CRCP/RPC9, protruding from the core and functioning primarily in transcription initiation; and additional subunits homologous to general transcription factors of the RNA polymerase II machinery, POLR3C/RPC3-POLR3F/RPC6-POLR3G/RPC7 heterotrimer required for transcription initiation and POLR3D/RPC4-POLR3E/RPC5 heterodimer involved in both transcription initiation and termination. Pol III exists as two alternative complexes defined by the mutually exclusive incorporation of subunit POLR3G/RPC7alpha or POLR3GL/RPC7beta. The presence of POLR3G/RPC7alpha or POLR3GL/RPC7beta differentially modulates the transcription potential of Pol III, with POLR3G/RPC7alpha specifically associated with transcription of snaR-A non-coding RNAs. As part of the RNA polymerase III complex, interacts with PKP2. It depends on Mg(2+) as a cofactor. In terms of tissue distribution, expressed in the brain, in the cortex and the white matter (at protein level).

It localises to the nucleus. The protein localises to the cytoplasm. Its subcellular location is the cytosol. It catalyses the reaction RNA(n) + a ribonucleoside 5'-triphosphate = RNA(n+1) + diphosphate. Functionally, catalytic core component of RNA polymerase III (Pol III), a DNA-dependent RNA polymerase which synthesizes small non-coding RNAs using the four ribonucleoside triphosphates as substrates. Synthesizes 5S rRNA, snRNAs, tRNAs and miRNAs from at least 500 distinct genomic loci. Pol III-mediated transcription cycle proceeds through transcription initiation, transcription elongation and transcription termination stages. During transcription initiation, Pol III is recruited to DNA promoters type I, II or III with the help of general transcription factors and other specific initiation factors. Once the polymerase has escaped from the promoter it enters the elongation phase during which RNA is actively polymerized, based on complementarity with the template DNA strand. Transcription termination involves the release of the RNA transcript and polymerase from the DNA. Forms Pol III active center together with the second largest subunit POLR3B/RPC2. Appends one nucleotide at a time to the 3' end of the nascent RNA, with POLR3A/RPC1 contributing a Mg(2+)-coordinating DxDGD motif, and POLR3B/RPC2 participating in the coordination of a second Mg(2+) ion and providing lysine residues believed to facilitate Watson-Crick base pairing between the incoming nucleotide and template base. Typically, Mg(2+) ions direct a 5' nucleoside triphosphate to form a phosphodiester bond with the 3' hydroxyl of the preceding nucleotide of the nascent RNA, with the elimination of pyrophosphate. Pol III plays a key role in sensing and limiting infection by intracellular bacteria and DNA viruses. Acts as a nuclear and cytosolic DNA sensor involved in innate immune response. Can sense non-self dsDNA that serves as template for transcription into dsRNA. The non-self RNA polymerase III transcripts, such as Epstein-Barr virus-encoded RNAs (EBERs) induce type I interferon and NF-kappa-B through the RIG-I pathway. The protein is DNA-directed RNA polymerase III subunit RPC1 of Homo sapiens (Human).